Consider the following 632-residue polypeptide: 1,4-alpha-glucan branching enzyme GlgB (632 aa).

Asp-310 serves as the catalytic Nucleophile. Residue Glu-363 is the Proton donor of the active site.

The protein belongs to the glycosyl hydrolase 13 family. GlgB subfamily. In terms of assembly, monomer.

It carries out the reaction Transfers a segment of a (1-&gt;4)-alpha-D-glucan chain to a primary hydroxy group in a similar glucan chain.. Its pathway is glycan biosynthesis; glycogen biosynthesis. In terms of biological role, catalyzes the formation of the alpha-1,6-glucosidic linkages in glycogen by scission of a 1,4-alpha-linked oligosaccharide from growing alpha-1,4-glucan chains and the subsequent attachment of the oligosaccharide to the alpha-1,6 position. In Desulfitobacterium hafniense (strain Y51), this protein is 1,4-alpha-glucan branching enzyme GlgB.